A 314-amino-acid chain; its full sequence is MQRIRIIDSHTGGEPTRLVIGGFPDLGQGDMAERRRLLGERHDAWRAACILEPRGSDVLVGALLCAPVDPEACAGVIFFNNSGYLGMCGHGTIGLVASLAHLGRIGPGVHRIETPVGEVEATLHEDGSVSVRNVPAYRYRRQVSVEVPGIGRVSGDIAWGGNWFFLVAGHGQRLAGDNLDALTAYTVAVQQALDDQDIRGEDGGAIDHIELFADDPHADSRNFVLCPGKAYDRSPCGTGTSAKLACLAADGKLLPGQPWRQASVIGSQFEGRYEWLDGQPGGPIVPTIRGRAHVSAEATLLLADDDPFAWGIRR.

The active-site Proton acceptor is cysteine 88. Residues 89–90 (GH), histidine 208, and aspartate 232 contribute to the substrate site. The Proton donor role is filled by cysteine 236. A substrate-binding site is contributed by 237–238 (GT).

It belongs to the proline racemase family. In terms of assembly, homodimer.

It carries out the reaction trans-4-hydroxy-L-proline = cis-4-hydroxy-D-proline. With respect to regulation, inhibited by iodoacetate, iodoacetamide and by high amounts (10 mM) of pyrrole-2-carboxylate (PYC). Not inhibited by PYC at 1 mM. Allows intracellular utilization of 4-hydroxyproline, one of the major constituents of host collagen, by converting trans-4-hydroxy-L-proline (t4LHyp) to cis-4-hydroxy-D-proline (c4DHyp), which can be further metabolized by intracellular 4-hydroxy-D-proline oxidases. Strong B-cell mitogen. Plays an important role in the regulation of intra- and extracellular amino acid pools, allowing the bacterium to profit from host precursors and enzymatic pathways. Cannot use L-proline, trans-3-hydroxy-L-proline (t3LHyp) and pyrrolidone-5-carboxylate (P5C) as substrate. The chain is 4-hydroxyproline 2-epimerase from Pseudomonas aeruginosa (strain ATCC 15692 / DSM 22644 / CIP 104116 / JCM 14847 / LMG 12228 / 1C / PRS 101 / PAO1).